The chain runs to 270 residues: MSMQTAPIKKITLNHLQAKKNQEKIIAITAYDALFAQIFDPLVDVILVGDSLNMSFFNQNDTLSASVEMMLYHTKAVCAGAKTPFIITDMPFGSYKDEKTALKNAIRVYKETQASAIKLEGGKEKAKLVKTLTNEGVIVVGHIGLMPQFVRLDGGYKIKGKNEEQQKKLLEDALSLEEAGVGLLVLEGITTPIAQKITQKIKIPTIGIGSGKDCDGQILVWSDMLGFFDSFKPKFVREYLKGKELIQNAIKQYADDVKKGNFPNELESYH.

Mg(2+) contacts are provided by D50 and D89. Residues 50–51 (DS), D89, and K118 contribute to the 3-methyl-2-oxobutanoate site. E120 is a Mg(2+) binding site. The active-site Proton acceptor is the E187.

Belongs to the PanB family. Homodecamer; pentamer of dimers. Requires Mg(2+) as cofactor.

It is found in the cytoplasm. The enzyme catalyses 3-methyl-2-oxobutanoate + (6R)-5,10-methylene-5,6,7,8-tetrahydrofolate + H2O = 2-dehydropantoate + (6S)-5,6,7,8-tetrahydrofolate. It participates in cofactor biosynthesis; (R)-pantothenate biosynthesis; (R)-pantoate from 3-methyl-2-oxobutanoate: step 1/2. Catalyzes the reversible reaction in which hydroxymethyl group from 5,10-methylenetetrahydrofolate is transferred onto alpha-ketoisovalerate to form ketopantoate. The chain is 3-methyl-2-oxobutanoate hydroxymethyltransferase from Helicobacter pylori (strain ATCC 700392 / 26695) (Campylobacter pylori).